The chain runs to 692 residues: Elongation factor G 2 (692 aa).

Positions 8–283 (EKTRNIGIMA…SVVAYLPSPL (276 aa)) constitute a tr-type G domain. GTP contacts are provided by residues 17–24 (AHIDAGKT), 81–85 (DTPGH), and 135–138 (NKMD).

This sequence belongs to the TRAFAC class translation factor GTPase superfamily. Classic translation factor GTPase family. EF-G/EF-2 subfamily.

The protein resides in the cytoplasm. Functionally, catalyzes the GTP-dependent ribosomal translocation step during translation elongation. During this step, the ribosome changes from the pre-translocational (PRE) to the post-translocational (POST) state as the newly formed A-site-bound peptidyl-tRNA and P-site-bound deacylated tRNA move to the P and E sites, respectively. Catalyzes the coordinated movement of the two tRNA molecules, the mRNA and conformational changes in the ribosome. The polypeptide is Elongation factor G 2 (Geobacter sulfurreducens (strain ATCC 51573 / DSM 12127 / PCA)).